Consider the following 206-residue polypeptide: MSFFTQLCSMDKKYWISLAVLSVTVLISALLKKRATETEDIVVVHYDGEKLNFVLRQPRLNMVSYTSFLRRVCNAFSVMPDKASLKLNGVTLKDGSLSDQNVQNGSELELELPKLSPAMQQIEAYIDELQQDLVPKIEAFCQSSPASAQDVQDLHTRLSETLLARMIKLDAVNVEDDPEARLKRKEAIRLSQQYLSKLDSTKNQNK.

Residues 122 to 202 (IEAYIDELQQ…QYLSKLDSTK (81 aa)) form the BAG domain. A Phosphoserine modification is found at S144.

As to quaternary structure, binds to the ATPase domain of HSP70/HSC chaperones.

Functionally, inhibits the chaperone activity of HSP70/HSC70 by promoting substrate release. The protein is BAG family molecular chaperone regulator 1B (bag102) of Schizosaccharomyces pombe (strain 972 / ATCC 24843) (Fission yeast).